The primary structure comprises 90 residues: Evasin P458 (90 aa).

Positions 1–24 are cleaved as a signal peptide; the sequence is MEVKTFAFLQIAVLIAFSLHSASA. Cystine bridges form between cysteine 44–cysteine 63, cysteine 48–cysteine 65, and cysteine 59–cysteine 76. Asparagine 47 is a glycosylation site (N-linked (GlcNAc...) asparagine).

Its subcellular location is the secreted. Functionally, salivary chemokine-binding protein which binds to host chemokines CXCL1, CXCL2, CXCL3, CXCL5, CXCL6 and CXCL13. The sequence is that of Evasin P458 from Ixodes ricinus (Common tick).